The sequence spans 4545 residues: Prolow-density lipoprotein receptor-related protein 1 (4545 aa).

A signal peptide spans 1–19 (MLTPPLLLLLPLLSALVSG). Topologically, residues 20–4424 (ATMDAPKTCS…SQQQPGHMAS (4405 aa)) are extracellular. LDL-receptor class A domains are found at residues 26–67 (KTCS…ICPQ) and 71–111 (QRCP…HCRE). Intrachain disulfides connect cysteine 28-cysteine 41, cysteine 35-cysteine 54, cysteine 48-cysteine 65, cysteine 73-cysteine 86, cysteine 80-cysteine 99, and cysteine 93-cysteine 109. An EGF-like 1 domain is found at 112–150 (LRANCSRMGCQHHCVPTPSGPTCYCNSSFQLQADGKTCK). Asparagine 115 is a glycosylation site (N-linked (GlcNAc...) asparagine). Cystine bridges form between cysteine 116–cysteine 125, cysteine 121–cysteine 134, cysteine 136–cysteine 149, cysteine 155–cysteine 165, cysteine 161–cysteine 174, and cysteine 176–cysteine 189. Asparagine 137 carries an N-linked (GlcNAc...) asparagine glycan. The region spanning 151–190 (DFDECSVYGTCSQLCTNTDGSFTCGCVEGYLLQPDNRSCK) is the EGF-like 2; calcium-binding domain. N-linked (GlcNAc...) asparagine glycans are attached at residues asparagine 186, asparagine 240, and asparagine 275. 3 LDL-receptor class B repeats span residues 293 to 335 (GNFY…DPAM), 336 to 379 (GKVF…DLVS), and 380 to 423 (RLVY…FENY). Asparagine 358 carries an N-linked (GlcNAc...) asparagine glycan. N-linked (GlcNAc...) asparagine glycosylation is present at asparagine 447. The EGF-like 3 domain maps to 475–521 (RSHACENDQYGKPGGCSDICLLANSHKARTCRCRSGFSLGSDGKSCK). 3 disulfide bridges follow: cysteine 479/cysteine 494, cysteine 490/cysteine 505, and cysteine 507/cysteine 520. 4 LDL-receptor class B repeats span residues 572–614 (GFIY…DWMG), 615–660 (DNLY…DPLN), 661–711 (GWMY…DIPA), and 712–755 (GRLY…HGNY). N-linked (GlcNAc...) asparagine glycosylation is present at asparagine 730. The EGF-like 4 domain occupies 804 to 844 (GTNKCRVNNGGCSSLCLATPGSRQCACAEDQVLDTDGVTCL). 33 disulfide bridges follow: cysteine 808–cysteine 819, cysteine 815–cysteine 828, cysteine 830–cysteine 843, cysteine 855–cysteine 867, cysteine 862–cysteine 880, cysteine 874–cysteine 891, cysteine 896–cysteine 908, cysteine 903–cysteine 921, cysteine 915–cysteine 932, cysteine 937–cysteine 949, cysteine 944–cysteine 962, cysteine 956–cysteine 972, cysteine 977–cysteine 990, cysteine 985–cysteine 1003, cysteine 997–cysteine 1012, cysteine 1016–cysteine 1028, cysteine 1023–cysteine 1041, cysteine 1035–cysteine 1052, cysteine 1063–cysteine 1076, cysteine 1070–cysteine 1089, cysteine 1083–cysteine 1098, cysteine 1105–cysteine 1119, cysteine 1113–cysteine 1132, cysteine 1126–cysteine 1141, cysteine 1146–cysteine 1160, cysteine 1153–cysteine 1173, cysteine 1167–cysteine 1183, cysteine 1186–cysteine 1197, cysteine 1193–cysteine 1207, cysteine 1209–cysteine 1222, cysteine 1228–cysteine 1238, cysteine 1234–cysteine 1247, and cysteine 1249–cysteine 1262. LDL-receptor class A domains lie at 853 to 893 (PQCQ…LCHQ), 894 to 934 (HTCP…TCSA), 935 to 974 (RTCP…SCAY), 975 to 1014 (PTCF…GCSH), 1014 to 1054 (HSCS…NCTN), 1061 to 1100 (GGCH…SCEG), 1103 to 1143 (HVCD…NCEA), and 1144 to 1183 (LACR…GELC). 6 residues coordinate Ca(2+): tryptophan 872, aspartate 875, aspartate 877, aspartate 879, aspartate 885, and glutamate 886. N-linked (GlcNAc...) asparagine glycosylation is present at asparagine 929. Positions 1033, 1036, 1038, 1040, 1046, and 1047 each coordinate Ca(2+). Residue asparagine 1051 is glycosylated (N-linked (GlcNAc...) asparagine). Ca(2+)-binding residues include tryptophan 1081, aspartate 1084, aspartate 1086, aspartate 1088, aspartate 1094, and glutamate 1095. N-linked (GlcNAc...) asparagine glycosylation is found at asparagine 1155 and asparagine 1156. 2 EGF-like domains span residues 1184–1223 (DQCS…HTCQ) and 1224–1263 (IQSY…ESCR). N-linked (GlcNAc...) asparagine glycans are attached at residues asparagine 1196 and asparagine 1219. LDL-receptor class B repeat units lie at residues 1310–1356 (SALY…DWIA), 1357–1399 (GNIY…DPRD), 1400–1446 (GILF…DYLE), 1447–1491 (KRIL…YGGE), and 1492–1532 (VYWT…YHPS). Asparagine 1512 is a glycosylation site (N-linked (GlcNAc...) asparagine). Positions 1537–1580 (APNPCEANGGRGPCSHLCLINYNRTVSCACPHLMKLHKDNTTCY) constitute an EGF-like 7 domain. Intrachain disulfides connect cysteine 1541–cysteine 1554, cysteine 1550–cysteine 1564, and cysteine 1566–cysteine 1579. 4 N-linked (GlcNAc...) asparagine glycosylation sites follow: asparagine 1559, asparagine 1576, asparagine 1617, and asparagine 1646. LDL-receptor class B repeat units follow at residues 1628–1670 (QRVY…DWVS), 1671–1714 (RNLF…HPLR), 1715–1754 (GKLY…DFPE), and 1755–1799 (SKLY…MGDK). N-linked (GlcNAc...) asparagine glycans are attached at residues asparagine 1724, asparagine 1734, asparagine 1764, and asparagine 1826. The EGF-like 8 domain occupies 1847–1888 (GTNPCSVNNGDCSQLCLPTSETTRSCMCTAGYSLRSGQQACE). 3 disulfides stabilise this stretch: cysteine 1851–cysteine 1862, cysteine 1858–cysteine 1872, and cysteine 1874–cysteine 1887. N-linked (GlcNAc...) asparagine glycosylation occurs at asparagine 1934. LDL-receptor class B repeat units follow at residues 1935-1977 (DTIY…DWIA), 1978-2020 (GNIY…HPEK), 2021-2064 (GYLF…DYQG), and 2065-2108 (GKLY…FEDF). Residue asparagine 1996 is glycosylated (N-linked (GlcNAc...) asparagine). Lysine 2010 carries the N6-acetyllysine modification. Asparagine 2049 carries an N-linked (GlcNAc...) asparagine glycan. 2 N-linked (GlcNAc...) asparagine glycosylation sites follow: asparagine 2118 and asparagine 2128. Residues 2156 to 2196 (GTNVCAVANGGCQQLCLYRGGGQRACACAHGMLAEDGASCR) form the EGF-like 9 domain. 3 disulfides stabilise this stretch: cysteine 2160–cysteine 2171, cysteine 2167–cysteine 2181, and cysteine 2183–cysteine 2195. 5 LDL-receptor class B repeats span residues 2254-2295 (NRIF…HRGW), 2296-2344 (DTLY…DECQ), 2345-2389 (NLMF…DHRA), 2390-2432 (EKLY…YGEH), and 2433-2474 (IFWT…VAND). A glycan (N-linked (GlcNAc...) asparagine) is linked at asparagine 2473. The region spanning 2479–2519 (ELSPCRINNGGCQDLCLLTHQGHVNCSCRGGRILQEDFTCR) is the EGF-like 10 domain. Intrachain disulfides connect cysteine 2483–cysteine 2494, cysteine 2490–cysteine 2504, and cysteine 2506–cysteine 2518. Asparagine 2503 carries N-linked (GlcNAc...) asparagine glycosylation. Residue asparagine 2522 is glycosylated (N-linked (GlcNAc...) asparagine). 7 LDL-receptor class A domains span residues 2523 to 2564 (SSCR…YCNS), 2565 to 2603 (RRCK…PCNK), 2604 to 2642 (TACG…NCSA), 2643 to 2691 (TDCS…DCPG), 2695 to 2733 (PRCP…HCNK), 2733 to 2772 (KFCS…HCEG), and 2773 to 2815 (KTCG…GCLY). 6 disulfide bridges follow: cysteine 2525-cysteine 2538, cysteine 2533-cysteine 2551, cysteine 2545-cysteine 2562, cysteine 2567-cysteine 2579, cysteine 2574-cysteine 2592, and cysteine 2586-cysteine 2601. N-linked (GlcNAc...) asparagine glycosylation is present at asparagine 2602. Disulfide bonds link cysteine 2606–cysteine 2618, cysteine 2613–cysteine 2631, cysteine 2625–cysteine 2640, cysteine 2645–cysteine 2667, cysteine 2661–cysteine 2680, cysteine 2674–cysteine 2689, cysteine 2697–cysteine 2709, cysteine 2704–cysteine 2722, cysteine 2716–cysteine 2731, cysteine 2735–cysteine 2747, cysteine 2742–cysteine 2760, cysteine 2754–cysteine 2770, cysteine 2775–cysteine 2788, cysteine 2782–cysteine 2801, and cysteine 2795–cysteine 2813. 2 N-linked (GlcNAc...) asparagine glycosylation sites follow: asparagine 2621 and asparagine 2639. Asparagine 2816 carries N-linked (GlcNAc...) asparagine glycosylation. LDL-receptor class A domains are found at residues 2817-2856 (STCD…ECEY), 2857-2900 (PTCG…HCTS), and 2903-2941 (HKCN…RGCH). 15 disulfide bridges follow: cysteine 2819–cysteine 2831, cysteine 2826–cysteine 2844, cysteine 2838–cysteine 2854, cysteine 2859–cysteine 2871, cysteine 2866–cysteine 2885, cysteine 2879–cysteine 2898, cysteine 2905–cysteine 2918, cysteine 2913–cysteine 2931, cysteine 2925–cysteine 2940, cysteine 2945–cysteine 2957, cysteine 2953–cysteine 2966, cysteine 2968–cysteine 2981, cysteine 2987–cysteine 2997, cysteine 2993–cysteine 3006, and cysteine 3008–cysteine 3022. The N-linked (GlcNAc...) asparagine glycan is linked to asparagine 2906. The region spanning 2942–2982 (VNECLSRKLSGCSQDCEDLKIGFKCRCRPGFRLKDDGRTCA) is the EGF-like 11 domain. One can recognise an EGF-like 12; calcium-binding domain in the interval 2983–3023 (DLDECSTTFPCSQLCINTHGSYKCLCVEGYAPRGGDPHSCK). 2 N-linked (GlcNAc...) asparagine glycosylation sites follow: asparagine 3049 and asparagine 3090. LDL-receptor class B repeat units lie at residues 3070–3114 (QMIY…DWVG), 3115–3157 (GNLY…DVQN), 3158–3201 (GYLY…DYVT), 3202–3244 (ERIY…FEDY), and 3245–3285 (VYWT…FHAL). Residue asparagine 3265 is glycosylated (N-linked (GlcNAc...) asparagine). In terms of domain architecture, EGF-like 13 spans 3291–3332 (PNHPCKVNNGGCSNLCLLSPGGGHKCACPTNFYLGGDGRTCV). 3 disulfides stabilise this stretch: cysteine 3295/cysteine 3306, cysteine 3302/cysteine 3316, and cysteine 3318/cysteine 3331. LDL-receptor class A domains are found at residues 3333–3372 (SNCT…DCPE), 3373–3411 (FKCR…NCDI), 3412–3451 (HVCL…DCPE), 3452–3492 (VTCA…NCTQ), 3493–3534 (MTCG…ECDE), 3535–3573 (RTCE…SCTP), 3574–3612 (RPCS…DCTP), 3612–3650 (PRCD…ACGT), 3653–3693 (RTCP…ECAR), 3694–3734 (FICP…DCEP), and 3740–3779 (PHCK…DCSI). The N-linked (GlcNAc...) asparagine glycan is linked to asparagine 3334. Intrachain disulfides connect cysteine 3335–cysteine 3347, cysteine 3342–cysteine 3360, cysteine 3354–cysteine 3370, cysteine 3375–cysteine 3387, cysteine 3382–cysteine 3400, cysteine 3394–cysteine 3409, cysteine 3414–cysteine 3427, cysteine 3421–cysteine 3440, cysteine 3434–cysteine 3449, cysteine 3454–cysteine 3467, cysteine 3461–cysteine 3480, cysteine 3474–cysteine 3490, cysteine 3495–cysteine 3508, cysteine 3502–cysteine 3521, cysteine 3515–cysteine 3532, cysteine 3537–cysteine 3549, cysteine 3544–cysteine 3562, cysteine 3556–cysteine 3571, cysteine 3576–cysteine 3588, cysteine 3583–cysteine 3601, cysteine 3595–cysteine 3610, cysteine 3614–cysteine 3626, cysteine 3621–cysteine 3639, cysteine 3633–cysteine 3648, cysteine 3655–cysteine 3667, cysteine 3662–cysteine 3680, cysteine 3674–cysteine 3691, cysteine 3696–cysteine 3710, cysteine 3704–cysteine 3723, cysteine 3717–cysteine 3732, cysteine 3742–cysteine 3755, cysteine 3750–cysteine 3768, cysteine 3762–cysteine 3777, cysteine 3786–cysteine 3799, cysteine 3793–cysteine 3808, cysteine 3810–cysteine 3823, cysteine 3829–cysteine 3839, cysteine 3835–cysteine 3848, and cysteine 3850–cysteine 3861. A glycan (N-linked (GlcNAc...) asparagine) is linked at asparagine 3489. N-linked (GlcNAc...) asparagine glycosylation occurs at asparagine 3663. 2 consecutive EGF-like domains span residues 3782 to 3824 (KLTS…PGCQ) and 3825 to 3862 (DINE…NTCK). Asparagine 3789 carries N-linked (GlcNAc...) asparagine glycosylation. A glycan (N-linked (GlcNAc...) asparagine) is linked at asparagine 3840. LDL-receptor class B repeat units follow at residues 3913-3955 (GRVY…HLNI), 3971-4013 (GNVY…DPLR), 4014-4057 (GTMY…DYHN), and 4058-4102 (ERLY…FEDY). The Recognition site for proteolytical processing motif lies at 3941 to 3944 (RHRR). Residue asparagine 3954 is glycosylated (N-linked (GlcNAc...) asparagine). 2 N-linked (GlcNAc...) asparagine glycosylation sites follow: asparagine 4076 and asparagine 4126. 7 consecutive EGF-like domains span residues 4148–4184 (VTNP…GTCV), 4197–4233 (RPGT…DKCE), 4233–4269 (ELDQ…PKCT), 4269–4305 (TAQV…DRCQ), 4305–4341 (QYRQ…PRCE), 4341–4376 (EVNK…PSCL), and 4374–4410 (SCLT…PRCE). Disulfide bonds link cysteine 4152–cysteine 4161, cysteine 4157–cysteine 4170, cysteine 4172–cysteine 4183, cysteine 4201–cysteine 4211, cysteine 4205–cysteine 4221, cysteine 4223–cysteine 4232, cysteine 4237–cysteine 4247, cysteine 4241–cysteine 4257, cysteine 4259–cysteine 4268, cysteine 4273–cysteine 4283, cysteine 4277–cysteine 4293, cysteine 4295–cysteine 4304, cysteine 4309–cysteine 4319, cysteine 4313–cysteine 4329, cysteine 4331–cysteine 4340, cysteine 4345–cysteine 4353, and cysteine 4348–cysteine 4364. Residue asparagine 4180 is glycosylated (N-linked (GlcNAc...) asparagine). N-linked (GlcNAc...) asparagine glycosylation is found at asparagine 4279 and asparagine 4280. Asparagine 4365 carries an N-linked (GlcNAc...) asparagine glycan. 4 disulfides stabilise this stretch: cysteine 4366–cysteine 4375, cysteine 4378–cysteine 4388, cysteine 4382–cysteine 4398, and cysteine 4400–cysteine 4409. Residues 4425 to 4445 (ILIPLLLLLLLLLVAGVVFWY) traverse the membrane as a helical segment. The Cytoplasmic segment spans residues 4446 to 4545 (KRRVRGAKGF…PEDEIGDPLA (100 aa)). Positions 4446-4545 (KRRVRGAKGF…PEDEIGDPLA (100 aa)) are interaction with MAFB. Threonine 4461 bears the Phosphothreonine mark. The short motif at 4503–4508 (FTNPVY) is the NPXY motif element. Tyrosine 4508 is subject to Phosphotyrosine. Serine 4518, serine 4521, and serine 4524 each carry phosphoserine.

This sequence belongs to the LDLR family. Heterodimer of an 85-kDa membrane-bound carboxyl subunit and a non-covalently attached 515-kDa N-terminal subunit. Intracellular domain interacts with MAFB. Found in a complex with PID1/PCLI1, LRP1 and CUBNI. Interacts with SNX17, PID1/PCLI1, PDGF and CUBN. The intracellular domain interacts with SHC1, GULP1 and DAB1. Can weakly interact (via NPXY motif) with DAB2 (via PID domain); the interaction is enhanced by tyrosine phosphorylation of the NPXY motif. Interacts with MDK; promotes neuronal survival. Interacts with LRPAP1; this interaction is followed by rapid internalization. Interacts with uPA/PLAU and PAI1/SERPINE1, either individually or in complex with each other, leading to rapid endocytosis; this interaction is abolished in the presence of LRPAP1/RAP. Also interacts with tPA/PLAT alone or in complex with SERPINE1. Interacts with the urokinase receptor PLAUR; this interaction leads to PLAUR internalization and is impaired in the presence of SORL1. Interacts with PDGFB. Interacts with TAU/MAPT, leading to endocytosis; this interaction is reduced in the presence of LRPAP1/RAP. Interacts with IGFBP3. Interacts with ADGRG6. In terms of processing, phosphorylated on serine and threonine residues. Phosphorylated on tyrosine residues upon stimulation with PDGF. Tyrosine phosphorylation promotes interaction with SHC1. Post-translationally, cleaved into a 85 kDa membrane-spanning subunit (LRP-85) and a 515 kDa large extracellular domain (LRP-515) that remains non-covalently associated. Gamma-secretase-dependent cleavage of LRP-85 releases the intracellular domain from the membrane.

The protein localises to the cell membrane. The protein resides in the membrane. It localises to the coated pit. Its subcellular location is the golgi outpost. It is found in the cytoplasm. The protein localises to the cytoskeleton. The protein resides in the microtubule organizing center. It localises to the nucleus. Endocytic receptor involved in endocytosis and in phagocytosis of apoptotic cells. Required for early embryonic development. Involved in cellular lipid homeostasis. Involved in the plasma clearance of chylomicron remnants and activated LRPAP1 (alpha 2-macroglobulin), as well as the local metabolism of complexes between plasminogen activators and their endogenous inhibitors. Acts as an alpha-2-macroglobulin receptor. Acts as a TAU/MAPT receptor and controls the endocytosis of TAU/MAPT as well as its subsequent spread. May modulate cellular events, such as APP metabolism, kinase-dependent intracellular signaling, neuronal calcium signaling as well as neurotransmission. Also acts as a receptor for IGFBP3 to mediate cell growth inhibition. Functionally, (Microbial infection) Functions as a receptor for Vibrio cholerae cholix toxin and for Pseudomonas aeruginosa exotoxin A. This Mus musculus (Mouse) protein is Prolow-density lipoprotein receptor-related protein 1.